The primary structure comprises 560 residues: Probable 2,3-bisphosphoglycerate-independent phosphoglycerate mutase 2 (560 aa).

Gly2 is subject to N-acetylglycine. Residues Asp29 and Ser82 each contribute to the Mn(2+) site. The Phosphoserine intermediate role is filled by Ser82. Residues His141, Arg171–Asp172, Arg207, Arg214, Arg287–Arg290, and Lys362 contribute to the substrate site. The Mn(2+) site is built by Asp431, His435, Asp472, His473, and His502.

This sequence belongs to the BPG-independent phosphoglycerate mutase family. In terms of assembly, monomer. Mn(2+) serves as cofactor.

The protein localises to the cytoplasm. The enzyme catalyses (2R)-2-phosphoglycerate = (2R)-3-phosphoglycerate. The protein operates within carbohydrate degradation; glycolysis; pyruvate from D-glyceraldehyde 3-phosphate: step 3/5. In terms of biological role, catalyzes the interconversion of 2-phosphoglycerate (2-PGA) and 3-phosphoglycerate (3-PGA). Required for guard cell function (e.g. blue light-, abscisic acid- (ABA), and low CO(2)-regulated stomatal movements) and fertility (e.g. pollen grains production). This is Probable 2,3-bisphosphoglycerate-independent phosphoglycerate mutase 2 (PGM2) from Arabidopsis thaliana (Mouse-ear cress).